The primary structure comprises 228 residues: tRNA (guanine-N(1)-)-methyltransferase (228 aa).

S-adenosyl-L-methionine-binding positions include glycine 111 and 131 to 136 (IGDFIL).

This sequence belongs to the RNA methyltransferase TrmD family. Homodimer.

The protein resides in the cytoplasm. The enzyme catalyses guanosine(37) in tRNA + S-adenosyl-L-methionine = N(1)-methylguanosine(37) in tRNA + S-adenosyl-L-homocysteine + H(+). In terms of biological role, specifically methylates guanosine-37 in various tRNAs. This chain is tRNA (guanine-N(1)-)-methyltransferase, found in Pelagibacter ubique (strain HTCC1062).